The chain runs to 531 residues: Fatty acid--[acyl-carrier-protein] ligase MmaC (531 aa).

Thr-169 lines the Mg(2+) pocket. ATP is bound by residues Ile-218, Val-308, and Ser-312. Residue Glu-313 participates in Mg(2+) binding. Asp-403 provides a ligand contact to ATP.

It belongs to the ATP-dependent AMP-binding enzyme family. The cofactor is Mg(2+).

The catalysed reaction is a (2E)-enoyl fatty acid + holo-[ACP] + ATP = a (2E)-enoyl-[ACP] + AMP + diphosphate. The enzyme catalyses a (2E)-enoyl fatty acid + ATP + H(+) = a (2E)-2-fatty-enoyl-AMP + diphosphate. It catalyses the reaction a (2E)-2-fatty-enoyl-AMP + holo-[ACP] = a (2E)-enoyl-[ACP] + AMP + H(+). It carries out the reaction (2E)-decenoate + holo-[ACP] + ATP = (2E)-decenoyl-[ACP] + AMP + diphosphate. The catalysed reaction is a (3R)-3-isocyanyl-fatty acid + holo-[ACP] + ATP = a (3R)-3-isocyanyl-fatty acyl-[ACP] + AMP + diphosphate. The enzyme catalyses a (3R)-3-isocyanyl-fatty acid + ATP + H(+) = a (3R)-3-isocyanyl-fatty acyl-AMP + diphosphate. It catalyses the reaction a (3R)-3-isocyanyl-fatty acyl-AMP + holo-[ACP] = a (3R)-3-isocyanyl-fatty acyl-[ACP] + AMP + H(+). Functionally, acyl:acyl-carrier protein ligase involved in the biosynthesis of a unique class of isonitrile lipopeptides (INLPs) that seem to play a role in metal acquisition in M.marinum. Acts twice during the INLP pathway, catalyzing the activation of (2E)-2-decenoate as well as probably the corresponding (3R)-3-isocyanyl-fatty acid as acyl-adenylates (acyl-AMP), and then the acyl transfer to the dedicated acyl-carrier protein MmaB. In Mycobacterium marinum (strain ATCC BAA-535 / M), this protein is Fatty acid--[acyl-carrier-protein] ligase MmaC.